The following is a 339-amino-acid chain: Dihydroorotase (339 aa).

Residues His12 and His14 each coordinate Zn(2+). Substrate is bound by residues 14 to 16 (HVR) and Asn40. Residues Lys94, His133, His167, and Asp239 each coordinate Zn(2+). Lys94 carries the N6-carboxylysine modification. His133 lines the substrate pocket. The active site involves Asp239. Residues His243 and Ala255 each coordinate substrate.

Belongs to the metallo-dependent hydrolases superfamily. DHOase family. Class II DHOase subfamily. As to quaternary structure, homodimer. Zn(2+) serves as cofactor.

The enzyme catalyses (S)-dihydroorotate + H2O = N-carbamoyl-L-aspartate + H(+). The protein operates within pyrimidine metabolism; UMP biosynthesis via de novo pathway; (S)-dihydroorotate from bicarbonate: step 3/3. In terms of biological role, catalyzes the reversible cyclization of carbamoyl aspartate to dihydroorotate. The sequence is that of Dihydroorotase from Helicobacter pylori (strain ATCC 700392 / 26695) (Campylobacter pylori).